We begin with the raw amino-acid sequence, 400 residues long: Iron(III) enterobactin esterase (400 aa).

The protein belongs to the Fes family.

The protein resides in the cytoplasm. It catalyses the reaction Fe(III)-enterobactin + 3 H2O + H(+) = Fe(III)-[N-(2,3-dihydroxybenzoyl)-L-serine] + 2 N-(2,3-dihydroxybenzoyl)-L-serine. It carries out the reaction Fe(III)-enterobactin + H2O = Fe(III)-[N-(2,3-dihydroxybenzoyl)-L-serine]3 + H(+). The enzyme catalyses Fe(III)-[N-(2,3-dihydroxybenzoyl)-L-serine]3 + H2O + H(+) = Fe(III)-[N-(2,3-dihydroxybenzoyl)-L-serine]2 + N-(2,3-dihydroxybenzoyl)-L-serine. The catalysed reaction is Fe(III)-[N-(2,3-dihydroxybenzoyl)-L-serine]2 + H2O + H(+) = Fe(III)-[N-(2,3-dihydroxybenzoyl)-L-serine] + N-(2,3-dihydroxybenzoyl)-L-serine. It catalyses the reaction enterobactin + 3 H2O = 3 N-(2,3-dihydroxybenzoyl)-L-serine + 2 H(+). Its function is as follows. Catalyzes the hydrolysis of ferric enterobactin (Fe-Ent). Is responsible for the release of iron from ferric enterobactin. Also catalyzes the hydrolysis of iron-free enterobactin (Ent). Hydrolyzes ferric monoglucosyl-C-Ent (Fe-MGE) poorly and does not hydrolyze ferric diglucosyl-C-Ent (Fe-DGE) or ferric triglucosyl-C-Ent (Fe-TGE) at all. Also hydrolyzes apo MGE, but catalyzes the hydrolysis of apo DGE very poorly, and does not process apo TGE at all. The catalytic efficiency for processing Fe-Ent is much higher than that for apo Ent, suggesting that Fe-Ent is the physiological substrate. This is Iron(III) enterobactin esterase from Escherichia coli O6:H1 (strain CFT073 / ATCC 700928 / UPEC).